The following is a 159-amino-acid chain: Probable chemoreceptor glutamine deamidase CheD 1 (159 aa).

It belongs to the CheD family.

It carries out the reaction L-glutaminyl-[protein] + H2O = L-glutamyl-[protein] + NH4(+). Functionally, probably deamidates glutamine residues to glutamate on methyl-accepting chemotaxis receptors (MCPs), playing an important role in chemotaxis. This chain is Probable chemoreceptor glutamine deamidase CheD 1, found in Methanosarcina acetivorans (strain ATCC 35395 / DSM 2834 / JCM 12185 / C2A).